The primary structure comprises 325 residues: Aldo-keto reductase family 1 member A1 (325 aa).

Position 2 is an N-acetylalanine (alanine 2). The residue at position 4 (serine 4) is a Phosphoserine. NADP(+) is bound by residues 11 to 20 (GQKMPLIGLG), threonine 21, and tryptophan 22. A Phosphoserine modification is found at serine 38. Aspartate 45 serves as a coordination point for NADP(+). The active-site Proton donor is the tyrosine 50. Lysine 127 carries the N6-acetyllysine; alternate modification. Position 127 is an N6-succinyllysine; alternate (lysine 127). Position 145 is an N6-succinyllysine (lysine 145). NADP(+) is bound by residues serine 162, asparagine 163, serine 211, leucine 213, serine 215, serine 216, lysine 263, serine 264, isoleucine 265, threonine 266, arginine 269, glutamine 272, and asparagine 273. Phosphoserine is present on serine 211.

Belongs to the aldo/keto reductase family. Monomer. Widely expressed. Highly expressed in kidney, salivary gland and liver. Detected in trachea, stomach, brain, lung, prostate, placenta, mammary gland, small intestine and lung.

It localises to the cytoplasm. The protein resides in the cytosol. The protein localises to the apical cell membrane. The catalysed reaction is a primary alcohol + NADP(+) = an aldehyde + NADPH + H(+). It catalyses the reaction allyl alcohol + NADP(+) = acrolein + NADPH + H(+). It carries out the reaction glycerol + NADP(+) = D-glyceraldehyde + NADPH + H(+). The enzyme catalyses glycerol + NADP(+) = L-glyceraldehyde + NADPH + H(+). The catalysed reaction is hydroxyacetone + NADP(+) = methylglyoxal + NADPH + H(+). It catalyses the reaction a 4-hydroxynonen-1-ol + NADP(+) = a 4-hydroxynonenal + NADPH + H(+). It carries out the reaction 3-deoxyfructose + NADP(+) = 3-deoxyglucosone + NADPH + H(+). The enzyme catalyses L-gulonate + NADP(+) = aldehydo-D-glucuronate + NADPH + H(+). The catalysed reaction is L-gulono-1,4-lactone + NADP(+) = D-glucurono-3,6-lactone + NADPH + H(+). It catalyses the reaction pyridine 3-methanol + NADP(+) = pyridine-3-carbaldehyde + NADPH + H(+). It carries out the reaction S-nitroso-CoA + NADPH + H(+) = sulfinamide-CoA + NADP(+). The enzyme catalyses S-nitrosoglutathione + NADPH + H(+) = S-(hydroxysulfenamide)glutathione + NADP(+). Catalyzes the NADPH-dependent reduction of a wide variety of carbonyl-containing compounds to their corresponding alcohols. Displays enzymatic activity towards endogenous metabolites such as aromatic and aliphatic aldehydes, ketones, monosaccharides and bile acids, with a preference for negatively charged substrates, such as glucuronate and succinic semialdehyde. Functions as a detoxifiying enzyme by reducing a range of toxic aldehydes. Reduces methylglyoxal and 3-deoxyglucosone, which are present at elevated levels under hyperglycemic conditions and are cytotoxic. Involved also in the detoxification of lipid-derived aldehydes like acrolein. Plays a role in the activation of procarcinogens, such as polycyclic aromatic hydrocarbon trans-dihydrodiols, and in the metabolism of various xenobiotics and drugs, including the anthracyclines doxorubicin (DOX) and daunorubicin (DAUN). Also acts as an inhibitor of protein S-nitrosylation by mediating degradation of S-nitroso-coenzyme A (S-nitroso-CoA), a cofactor required to S-nitrosylate proteins. S-nitroso-CoA reductase activity is involved in reprogramming intermediary metabolism in renal proximal tubules, notably by inhibiting protein S-nitrosylation of isoform 2 of PKM (PKM2). Also acts as a S-nitroso-glutathione reductase by catalyzing the NADPH-dependent reduction of S-nitrosoglutathione. Displays no reductase activity towards retinoids. The polypeptide is Aldo-keto reductase family 1 member A1 (AKR1A1) (Homo sapiens (Human)).